The sequence spans 1262 residues: Putative late blight resistance protein homolog R1B-23 (1262 aa).

Coiled-coil stretches lie at residues 364-384 (DSLA…ESMQ) and 475-496 (RMNE…KLLN). An NB-ARC domain is found at 475-761 (RMNEEIVGFE…ISESFIKSCE (287 aa)). An ATP-binding site is contributed by 508–515 (GMPGLGKT). 6 LRR repeats span residues 890-914 (FKFL…LFYL), 933-961 (LWNL…VWDM), 1036-1059 (PIRL…CISA), 1064-1083 (YLEL…TADH), 1084-1112 (LKHL…MFPQ), and 1133-1157 (FPNL…FMDI). Residues 1181–1248 (ETQVEDNQNT…KLRNVAYADE (68 aa)) enclose the HMA domain.

The protein belongs to the disease resistance NB-LRR family.

The protein localises to the cytoplasm. It is found in the membrane. Its function is as follows. Confers resistance to late blight (Phytophthora infestans) races carrying the avirulence gene Avr1. Resistance proteins guard the plant against pathogens that contain an appropriate avirulence protein via an indirect interaction with this avirulence protein. That triggers a defense system including the hypersensitive response, which restricts the pathogen growth. In Solanum demissum (Wild potato), this protein is Putative late blight resistance protein homolog R1B-23 (R1B-23).